A 325-amino-acid chain; its full sequence is Bifunctional ligase/repressor BirA (325 aa).

Positions 23 to 42 form a DNA-binding region, H-T-H motif; that stretch reads GQKISDALGCSRTAVWKHIE. The region spanning 74–262 is the BPL/LPL catalytic domain; that stretch reads RFGLKTEVMG…CFEKRYRDYM (189 aa). Residues Gln118, 122 to 124, and Lys189 each bind biotin; that span reads RGR.

The protein belongs to the biotin--protein ligase family.

The enzyme catalyses biotin + L-lysyl-[protein] + ATP = N(6)-biotinyl-L-lysyl-[protein] + AMP + diphosphate + H(+). In terms of biological role, acts both as a biotin--[acetyl-CoA-carboxylase] ligase and a repressor. This Bacillus spizizenii (strain ATCC 23059 / NRRL B-14472 / W23) (Bacillus subtilis subsp. spizizenii) protein is Bifunctional ligase/repressor BirA.